Consider the following 152-residue polypeptide: Cytochrome c-type biogenesis protein CcmE (152 aa).

Residues Met1–Arg8 are Cytoplasmic-facing. Residues Leu9–Ala29 traverse the membrane as a helical; Signal-anchor for type II membrane protein segment. Over Leu30 to Pro152 the chain is Periplasmic. 2 residues coordinate heme: His130 and Tyr134. The interval Asn133–Pro152 is disordered.

It belongs to the CcmE/CycJ family.

The protein resides in the cell inner membrane. Functionally, heme chaperone required for the biogenesis of c-type cytochromes. Transiently binds heme delivered by CcmC and transfers the heme to apo-cytochromes in a process facilitated by CcmF and CcmH. The protein is Cytochrome c-type biogenesis protein CcmE of Klebsiella pneumoniae (strain 342).